The chain runs to 77 residues: Small ribosomal subunit protein uS17 (77 aa).

It belongs to the universal ribosomal protein uS17 family. In terms of assembly, part of the 30S ribosomal subunit.

In terms of biological role, one of the primary rRNA binding proteins, it binds specifically to the 5'-end of 16S ribosomal RNA. This Wolbachia sp. subsp. Brugia malayi (strain TRS) protein is Small ribosomal subunit protein uS17.